The sequence spans 48 residues: Large ribosomal subunit protein bL32 (48 aa).

The tract at residues 24 to 48 (LPMPIKDKDGSYKMPHRVNPVTKEY) is disordered.

This sequence belongs to the bacterial ribosomal protein bL32 family.

The polypeptide is Large ribosomal subunit protein bL32 (Campylobacter lari (strain RM2100 / D67 / ATCC BAA-1060)).